The following is a 124-amino-acid chain: Holo-[acyl-carrier-protein] synthase (124 aa).

Mg(2+)-binding residues include Asp8 and Glu57.

It belongs to the P-Pant transferase superfamily. AcpS family. The cofactor is Mg(2+).

It is found in the cytoplasm. The catalysed reaction is apo-[ACP] + CoA = holo-[ACP] + adenosine 3',5'-bisphosphate + H(+). Transfers the 4'-phosphopantetheine moiety from coenzyme A to a Ser of acyl-carrier-protein. The chain is Holo-[acyl-carrier-protein] synthase from Leptospira borgpetersenii serovar Hardjo-bovis (strain JB197).